An 872-amino-acid chain; its full sequence is Chaperone protein ClpB 2 (872 aa).

Residues 6-148 enclose the Clp R domain; that stretch reads PNKFTEKAWE…AEIIKQIRGT (143 aa). 2 repeat regions span residues 9–73 and 85–148; these read FTEK…IAQQ and LGRS…IRGT. The segment at 161 to 342 is NBD1; the sequence is ESLEKYGRDL…RRFQEVLVDE (182 aa). An ATP-binding site is contributed by 208–215; the sequence is GEPGVGKT. Residues 343-551 are linker; the sequence is PNVLDTISIL…IAEIISKWTG (209 aa). Positions 393 to 527 form a coiled coil; it reads IDLVDEAAAK…LETQLAEQQT (135 aa). An NBD2 region spans residues 561–772; that stretch reads EKEKLLHLED…RVDETIIFHG (212 aa). Residue 611–618 participates in ATP binding; the sequence is GPTGVGKT. The interval 773–872 is C-terminal; sequence LQKSELRSIV…TSLRGDLVIV (100 aa).

Belongs to the ClpA/ClpB family. In terms of assembly, homohexamer. The oligomerization is ATP-dependent.

Its subcellular location is the cytoplasm. In terms of biological role, part of a stress-induced multi-chaperone system, it is involved in the recovery of the cell from heat-induced damage, in cooperation with DnaK, DnaJ and GrpE. Acts before DnaK, in the processing of protein aggregates. Protein binding stimulates the ATPase activity; ATP hydrolysis unfolds the denatured protein aggregates, which probably helps expose new hydrophobic binding sites on the surface of ClpB-bound aggregates, contributing to the solubilization and refolding of denatured protein aggregates by DnaK. The chain is Chaperone protein ClpB 2 (clpB2) from Synechocystis sp. (strain ATCC 27184 / PCC 6803 / Kazusa).